The following is a 174-amino-acid chain: UPF0316 protein lmo1776 (174 aa).

Transmembrane regions (helical) follow at residues 4-24 (GIFIVVTIFIVNILYVTIYTV), 36-56 (LAALSSVFEMIIYVVALSLVL), and 62-82 (IANVLAYAVGFGVGIIVGMKI).

Belongs to the UPF0316 family.

It localises to the cell membrane. The protein is UPF0316 protein lmo1776 of Listeria monocytogenes serovar 1/2a (strain ATCC BAA-679 / EGD-e).